Consider the following 582-residue polypeptide: Aspartate--tRNA ligase (582 aa).

Glu174 provides a ligand contact to L-aspartate. An aspartate region spans residues 198–201 (QITK). Arg220 contributes to the L-aspartate binding site. ATP contacts are provided by residues 220 to 222 (RDE) and Gln229. Residue His443 participates in L-aspartate binding. Glu477 provides a ligand contact to ATP. Arg484 contacts L-aspartate. 529–532 (GLDR) is a binding site for ATP.

The protein belongs to the class-II aminoacyl-tRNA synthetase family. Type 1 subfamily. As to quaternary structure, homodimer.

The protein resides in the cytoplasm. It carries out the reaction tRNA(Asp) + L-aspartate + ATP = L-aspartyl-tRNA(Asp) + AMP + diphosphate. Its function is as follows. Catalyzes the attachment of L-aspartate to tRNA(Asp) in a two-step reaction: L-aspartate is first activated by ATP to form Asp-AMP and then transferred to the acceptor end of tRNA(Asp). This Streptococcus pyogenes serotype M1 protein is Aspartate--tRNA ligase.